The sequence spans 1627 residues: Type III effector DspE (1627 aa).

2 stretches are compositionally biased toward polar residues: residues A22–Q44 and G59–L74. 2 disordered regions span residues A22 to Q102 and Q436 to W464. 3 short sequence motifs (wxxxE) span residues W464–D468, W514–E520, and W660–D667.

The protein belongs to the AvrE family.

The protein resides in the secreted. Its subcellular location is the host cell. Its function is as follows. Major virulence factor that may function as a water- and solute-permeable channel dedicated to creating osmotic/water potential perturbation and a water- and nutrient-rich apoplast in which bacteria multiply within the infected plant tissues. In terms of biological role, required for plant cell death in N.benthamiana leaves and leaf cell death in S.tuberosum. Essential for pathogenicity. Does not suppress callose formation. The protein is Type III effector DspE of Pectobacterium carotovorum (Erwinia carotovora).